A 366-amino-acid polypeptide reads, in one-letter code: Quinolinate synthase (366 aa).

Iminosuccinate contacts are provided by histidine 44 and serine 61. Residue cysteine 108 participates in [4Fe-4S] cluster binding. Residues 139 to 141 (YIN) and serine 160 contribute to the iminosuccinate site. Residue cysteine 228 participates in [4Fe-4S] cluster binding. Iminosuccinate-binding positions include 254–256 (HPE) and threonine 271. Cysteine 318 is a [4Fe-4S] cluster binding site.

Belongs to the quinolinate synthase family. Type 3 subfamily. It depends on [4Fe-4S] cluster as a cofactor.

It localises to the cytoplasm. It carries out the reaction iminosuccinate + dihydroxyacetone phosphate = quinolinate + phosphate + 2 H2O + H(+). The protein operates within cofactor biosynthesis; NAD(+) biosynthesis; quinolinate from iminoaspartate: step 1/1. Catalyzes the condensation of iminoaspartate with dihydroxyacetone phosphate to form quinolinate. The polypeptide is Quinolinate synthase (Listeria innocua serovar 6a (strain ATCC BAA-680 / CLIP 11262)).